The chain runs to 270 residues: Orotidine 5'-phosphate decarboxylase (270 aa).

Residues D43, 65–67 (KTH), 96–105 (DRKFGDIGST), Y217, and R236 contribute to the substrate site. The active-site Proton donor is K98.

It belongs to the OMP decarboxylase family.

The catalysed reaction is orotidine 5'-phosphate + H(+) = UMP + CO2. The protein operates within pyrimidine metabolism; UMP biosynthesis via de novo pathway; UMP from orotate: step 2/2. The polypeptide is Orotidine 5'-phosphate decarboxylase (URA3) (Aureobasidium pullulans (Black yeast)).